A 570-amino-acid chain; its full sequence is Double-stranded RNA-binding protein Staufen homolog 2 (570 aa).

Residues 8–75 form the DRBM 1 domain; sequence TAMCLVNELA…ANKALTESTL (68 aa). Disordered regions lie at residues 71–94 and 181–203; these read TESTLPKPVQKPPKSNVNNNPGSI and NEPIPERSPQNGESGKDVDDDKD. A compositionally biased stretch (polar residues) spans 83-94; the sequence is PKSNVNNNPGSI. The DRBM 2 domain occupies 95–181; sequence TPTVELNGLA…AMKALQALQN (87 aa). Serine 188 is subject to Phosphoserine. Basic and acidic residues predominate over residues 194 to 203; it reads SGKDVDDDKD. 2 consecutive DRBM domains span residues 207–274 and 307–375; these read SEIS…ELKK and NPIS…QLGY. Short sequence motifs (nuclear localization signal) lie at residues 273-291 and 373-412; these read KKLPPLPVVEKPKLFFKKR and LGYKASTNLQDQLEKTGENKGWSGPKPGFPEPTNNTPKGI. Residues 381-570 form a required for dendritic transport region; that stretch reads LQDQLEKTGE…QDCKKSNSAV (190 aa). The interval 387-409 is disordered; sequence KTGENKGWSGPKPGFPEPTNNTP. Residue serine 395 is modified to Phosphoserine. Phosphothreonine is present on threonine 405. Serine 416, serine 426, serine 440, serine 455, and serine 492 each carry phosphoserine. The segment at 528–570 is disordered; it reads DGAMNIEKGSLEKQAKHLREKADNNQAPPGSIAQDCKKSNSAV. A compositionally biased stretch (basic and acidic residues) spans 536-550; it reads GSLEKQAKHLREKAD.

In terms of assembly, interacts with the exportin XPO5. This requires RNA and RAN bound to GTP. Interacts with microtubules. Isoform 2 and isoform 3 may also interact with ribosomes, and this association is independent of translation. Identified in a mRNP complex, at least composed of DHX9, DDX3X, ELAVL1, HNRNPU, IGF2BP1, ILF3, PABPC1, PCBP2, PTBP2, STAU1, STAU2, SYNCRIP and YBX1. Interacts with TRIM71 (via NHL repeats) in an RNA-dependent manner.

The protein localises to the cytoplasm. It is found in the nucleus. It localises to the nucleolus. The protein resides in the endoplasmic reticulum. RNA-binding protein required for the microtubule-dependent transport of neuronal RNA from the cell body to the dendrite. As protein synthesis occurs within the dendrite, the localization of specific mRNAs to dendrites may be a prerequisite for neurite outgrowth and plasticity at sites distant from the cell body. The sequence is that of Double-stranded RNA-binding protein Staufen homolog 2 (STAU2) from Homo sapiens (Human).